Consider the following 301-residue polypeptide: Putative F-box/LRR-repeat protein 19 (301 aa).

Residues proline 18–leucine 66 form the F-box domain. LRR repeat units follow at residues isoleucine 108–asparagine 133, cysteine 134–tyrosine 159, serine 160–leucine 185, tyrosine 231–glycine 256, and cysteine 257–aspartate 282.

The protein is Putative F-box/LRR-repeat protein 19 (FBL19) of Arabidopsis thaliana (Mouse-ear cress).